The primary structure comprises 486 residues: Bifunctional protein HldE (486 aa).

A ribokinase region spans residues 1 to 329; that stretch reads MSSRLSGLLD…AALSVAGPVG (329 aa). Position 204-207 (204-207) interacts with ATP; sequence NAFE. Asp274 is a catalytic residue. The segment at 355-486 is cytidylyltransferase; sequence FTNGCFDILH…AIIARSETGK (132 aa).

It in the N-terminal section; belongs to the carbohydrate kinase PfkB family. This sequence in the C-terminal section; belongs to the cytidylyltransferase family. In terms of assembly, homodimer.

The catalysed reaction is D-glycero-beta-D-manno-heptose 7-phosphate + ATP = D-glycero-beta-D-manno-heptose 1,7-bisphosphate + ADP + H(+). It carries out the reaction D-glycero-beta-D-manno-heptose 1-phosphate + ATP + H(+) = ADP-D-glycero-beta-D-manno-heptose + diphosphate. Its pathway is nucleotide-sugar biosynthesis; ADP-L-glycero-beta-D-manno-heptose biosynthesis; ADP-L-glycero-beta-D-manno-heptose from D-glycero-beta-D-manno-heptose 7-phosphate: step 1/4. The protein operates within nucleotide-sugar biosynthesis; ADP-L-glycero-beta-D-manno-heptose biosynthesis; ADP-L-glycero-beta-D-manno-heptose from D-glycero-beta-D-manno-heptose 7-phosphate: step 3/4. Catalyzes the phosphorylation of D-glycero-D-manno-heptose 7-phosphate at the C-1 position to selectively form D-glycero-beta-D-manno-heptose-1,7-bisphosphate. Its function is as follows. Catalyzes the ADP transfer from ATP to D-glycero-beta-D-manno-heptose 1-phosphate, yielding ADP-D-glycero-beta-D-manno-heptose. The sequence is that of Bifunctional protein HldE from Hyphomonas neptunium (strain ATCC 15444).